A 98-amino-acid chain; its full sequence is Feather beta keratin (98 aa).

S2 is subject to N-acetylserine.

This sequence belongs to the avian keratin family. As to quaternary structure, the avian keratins (F-ker, S-ker, C-ker and B-ker) are a complex mixture of very similar polypeptides.

This Cathartes aura (Turkey vulture) protein is Feather beta keratin.